Consider the following 303-residue polypeptide: Uricase (303 aa).

Ala-2 carries the N-acetylalanine modification. 2 positions are modified to N6-acetyllysine; alternate: Lys-10 and Lys-23. Residues Lys-10 and Lys-23 each carry the N6-succinyllysine; alternate modification. Catalysis depends on Lys-23, which acts as the Charge relay system. 2 positions are modified to N6-acetyllysine: Lys-27 and Lys-36. Residues Ser-39 and Ser-63 each carry the phosphoserine modification. Catalysis depends on Thr-68, which acts as the Charge relay system. Urate-binding residues include Thr-68 and Asp-69. Lys-118, Lys-122, and Lys-164 each carry N6-acetyllysine. Phe-170 is a binding site for urate. 2 positions are modified to N6-acetyllysine: Lys-175 and Lys-185. Arg-187 contributes to the urate binding site. N6-acetyllysine; alternate occurs at positions 220 and 227. N6-succinyllysine; alternate is present on residues Lys-220 and Lys-227. Ser-231 carries the phosphoserine modification. Residues Val-234, Gln-235, and Asn-261 each contribute to the urate site. Residue His-263 is the Charge relay system of the active site. Lys-277 is subject to N6-acetyllysine. Tyr-288 carries the phosphotyrosine modification. A Microbody targeting signal motif is present at residues 301 to 303; sequence SRL.

Belongs to the uricase family. Acetylation of Lys-118, Lys-164 and Lys-290 is observed in liver mitochondria from fasted mice but not from fed mice. May be deacetylated by Sirt5; however it is unclear whether Sirt5 mediates deacetylation or desuccinylation of Uox; additional evidence is required to validate these results.

It is found in the peroxisome. The protein resides in the mitochondrion. The catalysed reaction is urate + O2 + H2O = 5-hydroxyisourate + H2O2. It functions in the pathway purine metabolism; urate degradation; (S)-allantoin from urate: step 1/3. Functionally, catalyzes the oxidation of uric acid to 5-hydroxyisourate, which is further processed to form (S)-allantoin. The sequence is that of Uricase (Uox) from Mus musculus (Mouse).